Here is a 501-residue protein sequence, read N- to C-terminus: Ribose import ATP-binding protein RbsA (501 aa).

ABC transporter domains lie at 6 to 242 (LQLS…VGRK) and 253 to 495 (VHGQ…VGKK). 38 to 45 (GENGAGKS) contributes to the ATP binding site.

It belongs to the ABC transporter superfamily. Ribose importer (TC 3.A.1.2.1) family. In terms of assembly, the complex is composed of an ATP-binding protein (RbsA), two transmembrane proteins (RbsC) and a solute-binding protein (RbsB).

The protein localises to the cell inner membrane. It carries out the reaction D-ribose(out) + ATP + H2O = D-ribose(in) + ADP + phosphate + H(+). Part of the ABC transporter complex RbsABC involved in ribose import. Responsible for energy coupling to the transport system. The chain is Ribose import ATP-binding protein RbsA from Vibrio vulnificus (strain YJ016).